Consider the following 381-residue polypeptide: Dihydroorotate dehydrogenase (quinone) (381 aa).

FMN is bound by residues 77 to 81 (AGCDK) and alanine 101. Lysine 81 provides a ligand contact to substrate. 126–129 (NRLG) provides a ligand contact to substrate. The FMN site is built by asparagine 158 and asparagine 191. Position 191 (asparagine 191) interacts with substrate. The active-site Nucleophile is the serine 194. Asparagine 196 provides a ligand contact to substrate. Lysine 229 and threonine 257 together coordinate FMN. 258 to 259 (NT) lines the substrate pocket. FMN is bound by residues glycine 287, glycine 316, and 337-338 (YT).

This sequence belongs to the dihydroorotate dehydrogenase family. Type 2 subfamily. Monomer. FMN serves as cofactor.

The protein resides in the cell membrane. It carries out the reaction (S)-dihydroorotate + a quinone = orotate + a quinol. Its pathway is pyrimidine metabolism; UMP biosynthesis via de novo pathway; orotate from (S)-dihydroorotate (quinone route): step 1/1. Functionally, catalyzes the conversion of dihydroorotate to orotate with quinone as electron acceptor. The sequence is that of Dihydroorotate dehydrogenase (quinone) (pyrD) from Synechocystis sp. (strain ATCC 27184 / PCC 6803 / Kazusa).